Here is a 465-residue protein sequence, read N- to C-terminus: Poly(A) polymerase I (465 aa).

Residues Asp80, Asp82, and Asp162 contribute to the active site. The tract at residues 430 to 465 (APPEQKGMLNELDDDPAPRRRRSRPRKRAPRREGTV) is disordered. The segment covering 448–459 (RRRRSRPRKRAP) has biased composition (basic residues).

It belongs to the tRNA nucleotidyltransferase/poly(A) polymerase family.

The catalysed reaction is RNA(n) + ATP = RNA(n)-3'-adenine ribonucleotide + diphosphate. In terms of biological role, adds poly(A) tail to the 3' end of many RNAs, which usually targets these RNAs for decay. Plays a significant role in the global control of gene expression, through influencing the rate of transcript degradation, and in the general RNA quality control. This Salmonella typhimurium (strain LT2 / SGSC1412 / ATCC 700720) protein is Poly(A) polymerase I.